We begin with the raw amino-acid sequence, 682 residues long: Potassium-transporting ATPase ATP-binding subunit (682 aa).

Transmembrane regions (helical) follow at residues 34-54 (PVMF…LAMV), 62-82 (ALFT…ANFA), 219-239 (IALT…TATL), and 254-274 (VLVA…LSAI). Asp-307 acts as the 4-aspartylphosphate intermediate in catalysis. ATP contacts are provided by residues Asp-344, Glu-348, 377 to 384 (FTAQSRMS), and Lys-395. 2 residues coordinate Mg(2+): Asp-518 and Asp-522. Transmembrane regions (helical) follow at residues 588–608 (FAII…LNVM), 616–636 (AILS…PLAL), and 662–682 (LVVP…LGLA).

The protein belongs to the cation transport ATPase (P-type) (TC 3.A.3) family. Type IA subfamily. In terms of assembly, the system is composed of three essential subunits: KdpA, KdpB and KdpC.

The protein resides in the cell inner membrane. The enzyme catalyses K(+)(out) + ATP + H2O = K(+)(in) + ADP + phosphate + H(+). Functionally, part of the high-affinity ATP-driven potassium transport (or Kdp) system, which catalyzes the hydrolysis of ATP coupled with the electrogenic transport of potassium into the cytoplasm. This subunit is responsible for energy coupling to the transport system and for the release of the potassium ions to the cytoplasm. The sequence is that of Potassium-transporting ATPase ATP-binding subunit from Salmonella schwarzengrund (strain CVM19633).